Reading from the N-terminus, the 240-residue chain is Urease accessory protein UreF (240 aa).

It belongs to the UreF family. In terms of assembly, ureD, UreF and UreG form a complex that acts as a GTP-hydrolysis-dependent molecular chaperone, activating the urease apoprotein by helping to assemble the nickel containing metallocenter of UreC. The UreE protein probably delivers the nickel.

It localises to the cytoplasm. Required for maturation of urease via the functional incorporation of the urease nickel metallocenter. This chain is Urease accessory protein UreF, found in Bradyrhizobium sp. (strain BTAi1 / ATCC BAA-1182).